Consider the following 292-residue polypeptide: MRLVGSQYKDMEDRLSPSARLVRSPGSQTRIHSIESILGFKGETLFHPAFPYGSGKTGKDTEHLSPKKDSNKHFDGVCRSTVMVSPDLPDADGGKLSDDENPKKKHRRNRTTFTTFQLHELERAFEKSHYPDVYSREELALKVNLPEVRVQVWFQNRRAKWRRQEKLEVSSIKLQESSMLSIPRSGPLSLGSGLPLEPWLTGPISTSSSPLQSLPSFITPQQAVPASYTPPQFLSSSTLNHSLPHIGAVCPPYQCSGFMDKFSLQEADPRNTSIASLRMKAKEHIQSIGKTW.

The tract at residues 1–27 is disordered; it reads MRLVGSQYKDMEDRLSPSARLVRSPGS. The short motif at 32 to 39 is the Octapeptide motif element; that stretch reads HSIESILG. Disordered stretches follow at residues 53 to 72 and 85 to 107; these read GSGK…DSNK and SPDL…KKHR. Basic and acidic residues-rich tracts occupy residues 57 to 72 and 92 to 102; these read TGKD…DSNK and DGGKLSDDENP. The homeobox DNA-binding region spans 106-165; the sequence is HRRNRTTFTTFQLHELERAFEKSHYPDVYSREELALKVNLPEVRVQVWFQNRRAKWRRQE. The OAR motif lies at 272–285; that stretch reads TSIASLRMKAKEHI. Residues 278 to 282 carry the Nuclear localization signal motif; it reads RMKAK.

It belongs to the paired homeobox family. Bicoid subfamily.

Its subcellular location is the nucleus. Plays a critical role in eye formation by regulating the initial specification of retinal cells and/or their subsequent proliferation. The sequence is that of Retinal homeobox protein Rx3 (rx3) from Danio rerio (Zebrafish).